Consider the following 496-residue polypeptide: MMNTKTFTSVNRVIYDDNYSLKQQQKSSFINQFLKGLLSAITLLFFILLLIFAENTLFGLGFGDENKSMMISKSLNAFFDLHSPKYLQLNFLIVFRFFILSFTLFYTLIKNFTNLYWHRATIKKYLPWFVLYLVIATISFLLFFTFFSVWPKEVFNLVFLLLVLFLLNLSYEIFNYFISKKTNPLLYDNYKNLIIAMVFQALLLLFVIITPLVWINTGKSPNFLFVDNRFYTRIVDIFTVQSGKNFIILIAFFFFLITFIVLANTNFFALVINKRYDRNYVKNNLWFILLLFSAIFIWLLRVFAYKHENENLPVGNNHLLWVYILQSFFAIIILILYMVFTLKKRLSVKSSLNTLLNLVVTQTILSLSLFLVTLFNSKSVVSLINVFITITVQMSVFGIYIFQNKNISTKLLVLLKVIMILIILTAAIVGFDYLLTSDHHNNYLFSNIQPKMNLVQIMLLLNFSLNFTLISYLTIKFAMVIFKINKLNKELNNEKK.

The next 12 membrane-spanning stretches (helical) occupy residues 33–53 (FLKG…LIFA), 89–109 (LNFL…YTLI), 127–147 (PWFV…FTFF), 154–174 (VFNL…YEIF), 193–213 (LIIA…TPLV), 247–267 (IILI…NTNF), 285–305 (LWFI…VFAY), 320–340 (LWVY…YMVF), 355–375 (LLNL…VTLF), 382–402 (SLIN…IYIF), 411–431 (LLVL…IVGF), and 455–475 (VQIM…YLTI).

The protein resides in the cell membrane. This is an uncharacterized protein from Ureaplasma parvum serovar 3 (strain ATCC 700970).